The sequence spans 271 residues: MTEQVRVAITGGSGRMGRTLIESAKLSSNIYLGAAVERAGSTLIGVDAGELAGVGAMNVAITDSLDNAVDDFDILIDFTSPEASVVHTDWCSRNGKAIVIGTTGFNHAQKEQIAAYAENTPIVMAPNMSVGVNLMWRLLELAAEVMGDYTDIEIIEGHHRHKKDAPSGTALKMGEVIAEVLGRDLEKCAVYGREGITEERSRETIGFSTIRAGDLVGEHTAMFADIGERLEITHKASSRMTFANGAMRAAFWLGDQGPGLYDMQQVLGLKD.

NAD(+) is bound by residues 11 to 16 (GGSGRM) and Glu-37. Arg-38 lines the NADP(+) pocket. Residues 101–103 (GTT) and 125–128 (APNM) each bind NAD(+). His-158 serves as the catalytic Proton donor/acceptor. His-159 contributes to the (S)-2,3,4,5-tetrahydrodipicolinate binding site. Lys-162 (proton donor) is an active-site residue. 168-169 (GT) is a (S)-2,3,4,5-tetrahydrodipicolinate binding site.

Belongs to the DapB family.

It is found in the cytoplasm. It carries out the reaction (S)-2,3,4,5-tetrahydrodipicolinate + NAD(+) + H2O = (2S,4S)-4-hydroxy-2,3,4,5-tetrahydrodipicolinate + NADH + H(+). The enzyme catalyses (S)-2,3,4,5-tetrahydrodipicolinate + NADP(+) + H2O = (2S,4S)-4-hydroxy-2,3,4,5-tetrahydrodipicolinate + NADPH + H(+). It participates in amino-acid biosynthesis; L-lysine biosynthesis via DAP pathway; (S)-tetrahydrodipicolinate from L-aspartate: step 4/4. Catalyzes the conversion of 4-hydroxy-tetrahydrodipicolinate (HTPA) to tetrahydrodipicolinate. The chain is 4-hydroxy-tetrahydrodipicolinate reductase from Shewanella loihica (strain ATCC BAA-1088 / PV-4).